The chain runs to 264 residues: Thiazole synthase (264 aa).

K106 (schiff-base intermediate with DXP) is an active-site residue. 1-deoxy-D-xylulose 5-phosphate-binding positions include G167, 193–194 (AG), and 215–216 (NS).

Belongs to the ThiG family. As to quaternary structure, homotetramer. Forms heterodimers with either ThiH or ThiS.

Its subcellular location is the cytoplasm. The enzyme catalyses [ThiS sulfur-carrier protein]-C-terminal-Gly-aminoethanethioate + 2-iminoacetate + 1-deoxy-D-xylulose 5-phosphate = [ThiS sulfur-carrier protein]-C-terminal Gly-Gly + 2-[(2R,5Z)-2-carboxy-4-methylthiazol-5(2H)-ylidene]ethyl phosphate + 2 H2O + H(+). It functions in the pathway cofactor biosynthesis; thiamine diphosphate biosynthesis. Catalyzes the rearrangement of 1-deoxy-D-xylulose 5-phosphate (DXP) to produce the thiazole phosphate moiety of thiamine. Sulfur is provided by the thiocarboxylate moiety of the carrier protein ThiS. In vitro, sulfur can be provided by H(2)S. The chain is Thiazole synthase from Prochlorococcus marinus (strain MIT 9301).